A 74-amino-acid polypeptide reads, in one-letter code: Cytochrome c oxidase subunit 2 (74 aa).

Over 1-14 (MAHPSQLGLQDAAS) the chain is Mitochondrial intermembrane. The chain crosses the membrane as a helical span at residues 15-45 (PVMEELLHFHDHALMIVFLISTLVLYIIVAM). At 46-74 (VSTKLTDKYTIDSQEIEIVWTVLPAVILI) the chain is on the mitochondrial matrix side.

It belongs to the cytochrome c oxidase subunit 2 family. In terms of assembly, component of the cytochrome c oxidase (complex IV, CIV), a multisubunit enzyme composed of 14 subunits. The complex is composed of a catalytic core of 3 subunits MT-CO1, MT-CO2 and MT-CO3, encoded in the mitochondrial DNA, and 11 supernumerary subunits COX4I, COX5A, COX5B, COX6A, COX6B, COX6C, COX7A, COX7B, COX7C, COX8 and NDUFA4, which are encoded in the nuclear genome. The complex exists as a monomer or a dimer and forms supercomplexes (SCs) in the inner mitochondrial membrane with NADH-ubiquinone oxidoreductase (complex I, CI) and ubiquinol-cytochrome c oxidoreductase (cytochrome b-c1 complex, complex III, CIII), resulting in different assemblies (supercomplex SCI(1)III(2)IV(1) and megacomplex MCI(2)III(2)IV(2)). Found in a complex with TMEM177, COA6, COX18, COX20, SCO1 and SCO2. Interacts with TMEM177 in a COX20-dependent manner. Interacts with COX20. Interacts with COX16. Requires Cu cation as cofactor.

Its subcellular location is the mitochondrion inner membrane. It carries out the reaction 4 Fe(II)-[cytochrome c] + O2 + 8 H(+)(in) = 4 Fe(III)-[cytochrome c] + 2 H2O + 4 H(+)(out). Component of the cytochrome c oxidase, the last enzyme in the mitochondrial electron transport chain which drives oxidative phosphorylation. The respiratory chain contains 3 multisubunit complexes succinate dehydrogenase (complex II, CII), ubiquinol-cytochrome c oxidoreductase (cytochrome b-c1 complex, complex III, CIII) and cytochrome c oxidase (complex IV, CIV), that cooperate to transfer electrons derived from NADH and succinate to molecular oxygen, creating an electrochemical gradient over the inner membrane that drives transmembrane transport and the ATP synthase. Cytochrome c oxidase is the component of the respiratory chain that catalyzes the reduction of oxygen to water. Electrons originating from reduced cytochrome c in the intermembrane space (IMS) are transferred via the dinuclear copper A center (CU(A)) of subunit 2 and heme A of subunit 1 to the active site in subunit 1, a binuclear center (BNC) formed by heme A3 and copper B (CU(B)). The BNC reduces molecular oxygen to 2 water molecules using 4 electrons from cytochrome c in the IMS and 4 protons from the mitochondrial matrix. The chain is Cytochrome c oxidase subunit 2 (mt-co2) from Megalops atlanticus (Tarpon).